The chain runs to 428 residues: AP-1 complex subunit mu (428 aa).

The residue at position 2 (Ala2) is an N-acetylalanine; partial. Residues 169-426 enclose the MHD domain; sequence KNEVFLDVVE…VCLSGDYQFR (258 aa).

This sequence belongs to the adaptor complexes medium subunit family. In terms of assembly, adaptor protein complex 1 (AP-1) is a heterotetramer composed of two large adaptins (gamma-type subunit and beta-type subunit), a medium adaptin (mu-type subunit) and a small adaptin (sigma-type subunit).

It localises to the golgi apparatus. Its subcellular location is the trans-Golgi network. The protein localises to the cytoplasmic vesicle. It is found in the clathrin-coated vesicle membrane. Its function is as follows. Subunit of clathrin-associated adaptor protein complex 1 that plays a role in protein sorting in the trans-Golgi network (TGN) and endosomes. The AP complexes mediate the recruitment of clathrin to membranes and the recognition of sorting signals within the cytosolic tails of transmembrane cargo molecules. Also involved in early steps of phagocytosis and macropinocytosis. This Dictyostelium discoideum (Social amoeba) protein is AP-1 complex subunit mu (apm1).